A 201-amino-acid polypeptide reads, in one-letter code: Recombination protein RecR (201 aa).

The C4-type zinc finger occupies 57–72; sequence CKYCRTFTEQEQCTIC. One can recognise a Toprim domain in the interval 81-176; the sequence is GQICVVESPA…TASRIAHGVP (96 aa).

It belongs to the RecR family.

In terms of biological role, may play a role in DNA repair. It seems to be involved in an RecBC-independent recombinational process of DNA repair. It may act with RecF and RecO. The chain is Recombination protein RecR from Photorhabdus laumondii subsp. laumondii (strain DSM 15139 / CIP 105565 / TT01) (Photorhabdus luminescens subsp. laumondii).